Reading from the N-terminus, the 96-residue chain is Co-chaperonin GroES (96 aa).

The protein belongs to the GroES chaperonin family. As to quaternary structure, heptamer of 7 subunits arranged in a ring. Interacts with the chaperonin GroEL.

Its subcellular location is the cytoplasm. Its function is as follows. Together with the chaperonin GroEL, plays an essential role in assisting protein folding. The GroEL-GroES system forms a nano-cage that allows encapsulation of the non-native substrate proteins and provides a physical environment optimized to promote and accelerate protein folding. GroES binds to the apical surface of the GroEL ring, thereby capping the opening of the GroEL channel. This is Co-chaperonin GroES from Shewanella oneidensis (strain ATCC 700550 / JCM 31522 / CIP 106686 / LMG 19005 / NCIMB 14063 / MR-1).